The sequence spans 2822 residues: Piezo-type mechanosensitive ion channel component 2 (2822 aa).

Over 1 to 12 (MASEVVCGLIFR) the chain is Cytoplasmic. Residues 13-24 (LLLPICLAVACA) traverse the membrane as a helical segment. Topologically, residues 25 to 30 (FRYNGL) are extracellular. A helical membrane pass occupies residues 31–43 (SFVYLIYLLLIPL). Over 44–50 (FSEPTKA) the chain is Cytoplasmic. Residues 51-76 (TMQGHTGRLLQSLCITSLSFLLLHII) form a helical membrane-spanning segment. Topologically, residues 77 to 122 (FHITLASLEAQHRITPAYNCSTWEKTFRQIGFESLKGADAGNGIRV) are extracellular. An N-linked (GlcNAc...) asparagine glycan is attached at asparagine 95. A helical membrane pass occupies residues 123 to 141 (FVPDIGMFIASLTIWLVCR). The Cytoplasmic segment spans residues 142 to 221 (TIVKKPDTEE…KEFIGNMITT (80 aa)). A helical membrane pass occupies residues 222–237 (AGKVVVTILLGSSGMM). Topologically, residues 238 to 240 (LPS) are extracellular. A helical transmembrane segment spans residues 241-258 (LTSAVYFFVFLGLCTWWS). Over 259 to 264 (WCRTFD) the chain is Cytoplasmic. A helical membrane pass occupies residues 265–287 (PLLFGCLCVLLAIFTAGHLIGLY). The Extracellular portion of the chain corresponds to 288–335 (LYQFQFFQEAVPPNDYYARLFGIKSVIQTDCASTWKIIVNPDLSWYHH). Residues 336-355 (ANPILLLVMYYTLATLIRIW) traverse the membrane as a helical segment. Over 356 to 492 (LQEPLVQEEM…SVRMHAMVAV (137 aa)) the chain is Cytoplasmic. The interval 450 to 481 (YRWEPSEESSEKKEEEEDKREDSEGEGSQEEK) is disordered. Positions 455 to 482 (SEESSEKKEEEEDKREDSEGEGSQEEKR) form a coiled coil. The span at 463–477 (EEEEDKREDSEGEGS) shows a compositional bias: acidic residues. The chain crosses the membrane as a helical span at residues 493 to 514 (FQFIMKQSYICALIAMMAWSIT). Topologically, residues 515–519 (YHSWL) are extracellular. A helical transmembrane segment spans residues 520–531 (TFVLLIWSCTLW). At 532 to 535 (MIRN) the chain is on the cytoplasmic side. A helical membrane pass occupies residues 536 to 562 (RRKYAMISSPFMVVYANLLLVLQYIWS). Over 563–583 (FELPEIKKVPGFLEKKEPGEL) the chain is Extracellular. A helical transmembrane segment spans residues 584-614 (ASKILFTITFWLLLRQHLTEQKALREKEALL). Residues 615–689 (SEVKIGSQEL…GNLVVALFIK (75 aa)) are Cytoplasmic-facing. Composition is skewed to acidic residues over residues 624 to 633 (LEEKEDEELQ) and 643 to 652 (EKEEEEEEEI). A disordered region spans residues 624–668 (LEEKEDEELQDVQVEGEPTEKEEEEEEEIKEERHEVKKEEEEEVE). Residues 653 to 662 (KEERHEVKKE) are compositionally biased toward basic and acidic residues. Residues 690 to 703 (YWIYVCGGMFFFVS) form a helical membrane-spanning segment. Residues 704–709 (FEGKIV) are Extracellular-facing. A helical transmembrane segment spans residues 710 to 728 (MYKIIYMVLFLFCVALYQV). Residues 729-737 (HYEWWRKIL) lie on the Cytoplasmic side of the membrane. The helical transmembrane segment at 738–757 (KYFWMSVVIYTMLVLIFIYT) threads the bilayer. Residues 758–789 (YQFENFPGLWQNMTGLKKEKLEDLGLKQFTVA) lie on the Extracellular side of the membrane. The chain crosses the membrane as a helical span at residues 790 to 811 (ELFTRIFIPTSFLLVCILHLHY). The Cytoplasmic portion of the chain corresponds to 812-957 (FHDRFLELTD…QVFMWWILEL (146 aa)). A Phosphoserine modification is found at serine 856. Residues 875 to 901 (QKLAESGEERPEECVKKTEKGEAGKDS) show a composition bias toward basic and acidic residues. Positions 875 to 919 (QKLAESGEERPEECVKKTEKGEAGKDSDESEEEEDEEEESEEEES) are disordered. The segment covering 902–919 (DESEEEEDEEEESEEEES) has biased composition (acidic residues). Residues 958-973 (HIIKIVSSYIIWVTVK) form a helical membrane-spanning segment. Residues 974 to 979 (EVSLFN) lie on the Extracellular side of the membrane. A helical membrane pass occupies residues 980–989 (YVFLISWAFA). Residues 990 to 997 (LPYAKLRR) are Cytoplasmic-facing. The helical transmembrane segment at 998 to 1018 (AASSVCTVWTCVIIVCKMLYQ) threads the bilayer. At 1019 to 1074 (LQTIKPENFSVNCSLPNENQTNIPLHELNKSLLYSAPVDPTEWVGLRKSSPLLVYL) the chain is on the extracellular side. A glycan (N-linked (GlcNAc...) asparagine) is linked at asparagine 1030. Residues cysteine 1031 and cysteine 1209 are joined by a disulfide bond. Residues 1075–1099 (RNNLLMLAILAFEVTVYRHQEYYRG) traverse the membrane as a helical segment. Over 1100 to 1140 (RNNLTAPVSKTIFHDITRLHLDDGLINCAKYFVNYFFYKFG) the chain is Cytoplasmic. A helical membrane pass occupies residues 1141–1155 (LETCFLMSVNVIGQR). Topologically, residues 1156 to 1157 (MD) are extracellular. A helical membrane pass occupies residues 1158 to 1171 (FYAMIHACWLIGVL). At 1172-1182 (YRRRRKAIAEV) the chain is on the cytoplasmic side. The helical transmembrane segment at 1183 to 1202 (WPKYCCFLACIITFQYFVCI) threads the bilayer. At 1203–1239 (GIPPAPCRDYPWRFKGAYFNDNIIKWLYFPDFIVRPN) the chain is on the extracellular side. A helical membrane pass occupies residues 1240 to 1260 (PVFLVYDFMLLLCASLQRQIF). The Cytoplasmic portion of the chain corresponds to 1261–1314 (EDENKAAVRIMAGDNVEICMNLDAASFSQHNPVPDFIHCRSYLDMSKVIIFSYL). A helical membrane pass occupies residues 1315 to 1327 (FWFVLTIIFITGT). The Extracellular portion of the chain corresponds to 1328-1333 (TRISIF). The chain crosses the membrane as a helical span at residues 1334–1346 (CMGYLVACFYFLL). At 1347 to 1355 (FGGDLLLKP) the chain is on the cytoplasmic side. The helical transmembrane segment at 1356–1381 (IKSILRYWDWLIAYNVFVITMKNILS) threads the bilayer. Residues 1382–1430 (IGACGYIGALVRNSCWLIQAFSLACTVKGYQMPEDDSRCKLPSGEAGII) are Extracellular-facing. The helical transmembrane segment at 1431–1447 (WDSICFAFLLLQRRVFM) threads the bilayer. The Cytoplasmic portion of the chain corresponds to 1448–1991 (SYYFLHVVAD…YAMYNTLVAR (544 aa)). A coiled-coil region spans residues 1475–1515 (TIVKAVKARIEEEKKSMDQLKRQMDRIKARQQKYKKGKERM). Disordered regions lie at residues 1505–1551 (QQKY…KKKQ) and 1611–1653 (LRQR…KKSD). Basic residues predominate over residues 1611-1621 (LRQRRKEKKKL). The segment covering 1622-1633 (AREEQKERRKGS) has biased composition (basic and acidic residues). The helical transmembrane segment at 1992 to 2006 (SEMVCYFVIILNHMT) threads the bilayer. The Extracellular segment spans residues 2007–2013 (SASIITL). A helical membrane pass occupies residues 2014 to 2025 (LLPILIFLWAML). Over 2026–2031 (SVPRPS) the chain is Cytoplasmic. The helical transmembrane segment at 2032–2053 (RRFWMMAIVYTEVAIVVKYFFQ) threads the bilayer. At 2054–2086 (FGFFPWNKDLEIYKERPYFPPNIIGVEKKEGYV) the chain is on the extracellular side. Residues 2087–2105 (LYDLIQLLALFFHRSILKC) form a helical membrane-spanning segment. At 2106–2259 (HGLWDEDDIV…HPDYSAVTDV (154 aa)) the chain is on the cytoplasmic side. Disordered stretches follow at residues 2120 to 2139 (DKEG…GSSD) and 2164 to 2205 (IRRK…SVLS). Over residues 2170-2197 (CSSSQISPRSSFSSNRSKRGSTSTRNSS) the composition is skewed to low complexity. Residues 2260–2279 (YVLMFLADTVDFIIIVFGFW) traverse the membrane as a helical segment. At 2280-2301 (AFGKHSAAADITSSLSEDQVPG) the chain is on the extracellular side. The chain crosses the membrane as a helical span at residues 2302-2322 (PFLVMVLIQFGTMVVDRALYL). Residues 2323 to 2326 (RKTV) lie on the Cytoplasmic side of the membrane. A helical transmembrane segment spans residues 2327–2350 (LGKVIFQVILVFGIHFWMFFILPG). Topologically, residues 2351–2359 (VTERKFSQN) are extracellular. A helical transmembrane segment spans residues 2360–2382 (LVAQLWYFVKCVYFGLSAYQIRC). Residues 2383-2467 (GYPTRVLGNF…YPQPRGQKKK (85 aa)) lie on the Cytoplasmic side of the membrane. The helical transmembrane segment at 2468–2491 (KAVKYGMGGMIIVLLICIVWFPLL) threads the bilayer. At 2492–2739 (FMSLIKSVAG…PSLGFLAGYG (248 aa)) the chain is on the extracellular side. Residue asparagine 2692 is glycosylated (N-linked (GlcNAc...) asparagine). The chain crosses the membrane as a helical span at residues 2740 to 2760 (IMGLYASVVLVIGKFVREFFS). The Cytoplasmic segment spans residues 2761–2822 (GISHSIMFEE…MIKWTREKTN (62 aa)).

Belongs to the PIEZO (TC 1.A.75) family. In terms of assembly, homotrimer; the homotrimer forms a propeller-shaped Piezo channel with a cation-ion conducting pore. Heterotrimeric interaction may occur between PIEZO1 and PIEZO2. Interacts with STOM13. Interacts with TMC7; the interaction inhibits PIEZO2-conducted mechanically activated currents. Interacts with TMC1; the interaction may be part of the MET complex. Interacts with MDFIC (via C-terminus); the interaction prolongs Piezo channel inactivation. Interacts with MDFI (via C-terminus); the interaction prolongs Piezo channel inactivation. Expressed in bladder, colon, and lung, but less abundant in kidney or skin. Strong expression is observed in dorsal root ganglia (DRG) sensory neurons. Expressed in a wide range of cutaneous low-threshold mechanoreceptors (LTMRs), including Merkel cells and Meissner's corpuscles. Expressed in sensory neurons. Expressed in cochlear inner and outer hair cells and vestibular organ hair cells. Expressed in pulmonary neuroepithelial cell bodies. Expressed in bladder urothelium and sensory neurons of the lower urinary tract. Expressed in sensory endings of proprioceptors innervating muscle spindles and Golgi tendon organs.

It localises to the cell membrane. The enzyme catalyses Ca(2+)(in) = Ca(2+)(out). Its activity is regulated as follows. Regulated by auxillary subunits MDFIC and MDFI. Channel activity is inhibited by TMEM120aa. Phosphatidic acid and lysophosphatidic acid inhibit Piezo2 channel activity. Functionally, pore-forming subunit of the mechanosensitive non-specific cation Piezo channel required for rapidly adapting mechanically activated (MA) currents and has a key role in sensing touch and tactile pain. Piezo channels are homotrimeric three-blade propeller-shaped structures that utilize a cap-motion and plug-and-latch mechanism to gate their ion-conducting pathways. Expressed in sensory neurons, is essential for diverse physiological processes, including respiratory control, systemic metabolism, urinary function, and proprioception. Mediates airway stretch sensing, enabling efficient respiration at birth and maintaining normal breathing in adults. It regulates brown and beige adipose tissue morphology and function, preventing systemic hypermetabolism. In the lower urinary tract, acts as a sensor in both the bladder urothelium and innervating sensory neurons and is required for bladder-stretch sensing and urethral micturition reflexes, ensuring proper urinary function. Additionally, Piezo2 serves as the principal mechanotransducer in proprioceptors, facilitating proprioception and coordinated body movements. In inner ear hair cells, PIEZO1/2 subunits may constitute part of the mechanotransducer (MET) non-selective cation channel complex where they may act as pore-forming ion-conducting component in the complex. Required for Merkel-cell mechanotransduction. Plays a major role in light-touch mechanosensation. In Mus musculus (Mouse), this protein is Piezo-type mechanosensitive ion channel component 2.